A 123-amino-acid chain; its full sequence is UPF0102 protein VSAL_I2655 (123 aa).

It belongs to the UPF0102 family.

This Aliivibrio salmonicida (strain LFI1238) (Vibrio salmonicida (strain LFI1238)) protein is UPF0102 protein VSAL_I2655.